The chain runs to 355 residues: Guanine nucleotide-binding protein G(i) subunit alpha (355 aa).

Residue glycine 2 is the site of N-myristoyl glycine attachment. Residue cysteine 3 is the site of S-palmitoyl cysteine attachment. Residues 33-355 form the G-alpha domain; the sequence is REVKLLLLGA…KNNLKDCGLF (323 aa). A G1 motif region spans residues 36–49; the sequence is KLLLLGAGESGKST. GTP-binding positions include 41–48, 176–182, 201–205, 270–273, and alanine 327; these read GAGESGKS, LRTRVKT, DVGGQ, and NKKD. Mg(2+)-binding residues include serine 48 and threonine 182. The interval 174–182 is G2 motif; it reads DVLRTRVKT. Residues 197–206 are G3 motif; that stretch reads FKLFDVGGQR. A G4 motif region spans residues 266–273; the sequence is ILFLNKKD. The interval 325 to 330 is G5 motif; sequence TCATDT.

It belongs to the G-alpha family. G(i/o/t/z) subfamily. In terms of assembly, g proteins are composed of 3 units; alpha, beta and gamma. The alpha chain contains the guanine nucleotide binding site.

Guanine nucleotide-binding proteins (G proteins) are involved as modulators or transducers in various transmembrane signaling systems. The chain is Guanine nucleotide-binding protein G(i) subunit alpha from Homarus americanus (American lobster).